The primary structure comprises 155 residues: 6,7-dimethyl-8-ribityllumazine synthase (155 aa).

5-amino-6-(D-ribitylamino)uracil is bound by residues Phe-23, 57-59 (AFE), and 81-83 (AVI). Position 86–87 (86–87 (ST)) interacts with (2S)-2-hydroxy-3-oxobutyl phosphate. The Proton donor role is filled by His-89. Phe-114 is a binding site for 5-amino-6-(D-ribitylamino)uracil. Arg-128 contacts (2S)-2-hydroxy-3-oxobutyl phosphate.

Belongs to the DMRL synthase family.

The catalysed reaction is (2S)-2-hydroxy-3-oxobutyl phosphate + 5-amino-6-(D-ribitylamino)uracil = 6,7-dimethyl-8-(1-D-ribityl)lumazine + phosphate + 2 H2O + H(+). It participates in cofactor biosynthesis; riboflavin biosynthesis; riboflavin from 2-hydroxy-3-oxobutyl phosphate and 5-amino-6-(D-ribitylamino)uracil: step 1/2. Its function is as follows. Catalyzes the formation of 6,7-dimethyl-8-ribityllumazine by condensation of 5-amino-6-(D-ribitylamino)uracil with 3,4-dihydroxy-2-butanone 4-phosphate. This is the penultimate step in the biosynthesis of riboflavin. This chain is 6,7-dimethyl-8-ribityllumazine synthase, found in Dehalococcoides mccartyi (strain ATCC BAA-2100 / JCM 16839 / KCTC 5957 / BAV1).